We begin with the raw amino-acid sequence, 464 residues long: ATP-dependent protease ATPase subunit HslU (464 aa).

Residues Val19, 61–66, Asp278, Glu342, and Arg414 each bind ATP; that span reads GVGKTE.

Belongs to the ClpX chaperone family. HslU subfamily. A double ring-shaped homohexamer of HslV is capped on each side by a ring-shaped HslU homohexamer. The assembly of the HslU/HslV complex is dependent on binding of ATP.

It localises to the cytoplasm. In terms of biological role, ATPase subunit of a proteasome-like degradation complex; this subunit has chaperone activity. The binding of ATP and its subsequent hydrolysis by HslU are essential for unfolding of protein substrates subsequently hydrolyzed by HslV. HslU recognizes the N-terminal part of its protein substrates and unfolds these before they are guided to HslV for hydrolysis. The protein is ATP-dependent protease ATPase subunit HslU of Halalkalibacterium halodurans (strain ATCC BAA-125 / DSM 18197 / FERM 7344 / JCM 9153 / C-125) (Bacillus halodurans).